We begin with the raw amino-acid sequence, 80 residues long: Acyl carrier protein (80 aa).

In terms of domain architecture, Carrier spans 4–79 (EEILQKVCSI…DAVKFIEEKK (76 aa)). Ser39 bears the O-(pantetheine 4'-phosphoryl)serine mark.

This sequence belongs to the acyl carrier protein (ACP) family. Post-translationally, 4'-phosphopantetheine is transferred from CoA to a specific serine of apo-ACP by AcpS. This modification is essential for activity because fatty acids are bound in thioester linkage to the sulfhydryl of the prosthetic group.

It localises to the cytoplasm. It functions in the pathway lipid metabolism; fatty acid biosynthesis. Functionally, carrier of the growing fatty acid chain in fatty acid biosynthesis. The protein is Acyl carrier protein of Prochlorococcus marinus subsp. pastoris (strain CCMP1986 / NIES-2087 / MED4).